Consider the following 862-residue polypeptide: MKVTTVKELDEKLKVIKEAQKKFSCYSQEMVDEIFRNAAMAAIDARIELAKAAVLETGMGLVEDKVIKNHFAGEYIYNKYKDEKTCGIIERNEPYGITKIAEPIGVVAAIIPVTNPTSTTIFKSLISLKTRNGIFFSPHPRAKKSTILAAKTILDAAVKSGAPENIIGWIDEPSIELTQYLMQKADITLATGGPSLVKSAYSSGKPAIGVGPGNTPVIIDESAHIKMAVSSIILSKTYDNGVICASEQSVIVLKSIYNKVKDEFQERGAYIIKKNELDKVREVIFKDGSVNPKIVGQSAYTIAAMAGIKVPKTTRILIGEVTSLGEEEPFAHEKLSPVLAMYEADNFDDALKKAVTLINLGGLGHTSGIYADEIKARDKIDRFSSAMKTVRTFVNIPTSQGASGDLYNFRIPPSFTLGCGFWGGNSVSENVGPKHLLNIKTVAERRENMLWFRVPHKVYFKFGCLQFALKDLKDLKKKRAFIVTDSDPYNLNYVDSIIKILEHLDIDFKVFNKVGREADLKTIKKATEEMSSFMPDTIIALGGTPEMSSAKLMWVLYEHPEVKFEDLAIKFMDIRKRIYTFPKLGKKAMLVAITTSAGSGSEVTPFALVTDNNTGNKYMLADYEMTPNMAIVDAELMMKMPKGLTAYSGIDALVNSIEAYTSVYASEYTNGLALEAIRLIFKYLPEAYKNGRTNEKAREKMAHASTMAGMASANAFLGLCHSMAIKLSSEHNIPSGIANALLIEEVIKFNAVDNPVKQAPCPQYKYPNTIFRYARIADYIKLGGNTDEEKVDLLINKIHELKKALNIPTSIKDAGVLEENFYSSLDRISELALDDQCTGANPRFPLTSEIKEMYINCFKKQP.

C244 is a catalytic residue. 420 to 425 (GFWGGN) contacts NAD(+).

It in the N-terminal section; belongs to the aldehyde dehydrogenase family. The protein in the C-terminal section; belongs to the iron-containing alcohol dehydrogenase family.

It carries out the reaction a primary alcohol + NAD(+) = an aldehyde + NADH + H(+). The catalysed reaction is a secondary alcohol + NAD(+) = a ketone + NADH + H(+). It catalyses the reaction an aldehyde + NAD(+) + H2O = a carboxylate + NADH + 2 H(+). In terms of biological role, has both aldehyde and alcohol dehydrogenase activities. Can use acetaldehyde, butyraldehyde, butanol and ethanol. In Clostridium acetobutylicum (strain ATCC 824 / DSM 792 / JCM 1419 / IAM 19013 / LMG 5710 / NBRC 13948 / NRRL B-527 / VKM B-1787 / 2291 / W), this protein is Aldehyde-alcohol dehydrogenase.